The primary structure comprises 563 residues: Putative inactive polypeptide N-acetylgalactosaminyltransferase 12 (563 aa).

The Cytoplasmic portion of the chain corresponds to 1-6 (MEVFAS). The chain crosses the membrane as a helical; Signal-anchor for type II membrane protein span at residues 7 to 29 (VLNCCFKYIVLPVWIFIVLLLLH). At 30–563 (RDLSSWDGLM…SVMQSANILV (534 aa)) the chain is on the lumenal side. Asn50 carries an N-linked (GlcNAc...) asparagine glycan. A disulfide bridge connects residues Cys97 and Cys334. The tract at residues 109 to 225 (MKPASIIMIF…NGWLSPLLDT (117 aa)) is catalytic subdomain A. A catalytic subdomain B region spans residues 280 to 342 (PYEVAAVRTS…PCSRVGHLQP (63 aa)). Residues Asn389 and Asn428 are each glycosylated (N-linked (GlcNAc...) asparagine). In terms of domain architecture, Ricin B-type lectin spans 433–549 (ASGHVKTLEF…ANGKQRWILD (117 aa)). An intrachain disulfide couples Cys446 to Cys461. 2 N-linked (GlcNAc...) asparagine glycosylation sites follow: Asn464 and Asn469. Cystine bridges form between Cys485–Cys499 and Cys523–Cys537. The N-linked (GlcNAc...) asparagine glycan is linked to Asn552.

This sequence belongs to the glycosyltransferase 2 family. GalNAc-T subfamily.

The protein resides in the golgi apparatus membrane. Its function is as follows. Probable inactive glycosyltransferase. In Drosophila melanogaster (Fruit fly), this protein is Putative inactive polypeptide N-acetylgalactosaminyltransferase 12 (pgant12).